Here is a 307-residue protein sequence, read N- to C-terminus: Homoserine kinase (307 aa).

86–96 (PIARGLGSSAA) contributes to the ATP binding site.

This sequence belongs to the GHMP kinase family. Homoserine kinase subfamily.

The protein localises to the cytoplasm. It carries out the reaction L-homoserine + ATP = O-phospho-L-homoserine + ADP + H(+). The protein operates within amino-acid biosynthesis; L-threonine biosynthesis; L-threonine from L-aspartate: step 4/5. Functionally, catalyzes the ATP-dependent phosphorylation of L-homoserine to L-homoserine phosphate. The polypeptide is Homoserine kinase (Petrotoga mobilis (strain DSM 10674 / SJ95)).